Consider the following 290-residue polypeptide: tRNA (adenine(58)-N(1))-methyltransferase catalytic subunit TRMT61A (290 aa).

N-acetylserine is present on Ser2. Substrate stretches follow at residues 20-22, 35-42, 64-65, 85-89, and 110-117; these read LGH, QTQTRHGV, GW, QILYS, and SGTGSGSV. S-adenosyl-L-methionine-binding positions include Leu87, 114–116, Glu135, Arg140, 163–164, and Asp181; these read SGS and DV. Substrate regions lie at residues 180–183 and 205–212; these read LDIP and SFSPCIEQ. Residue Thr279 coordinates substrate.

It belongs to the class I-like SAM-binding methyltransferase superfamily. TRM61 family. As to quaternary structure, heterotetramer; composed of two copies of TRMT6 and two copies of TRMT61A.

The protein localises to the nucleus. It catalyses the reaction adenosine(58) in tRNA + S-adenosyl-L-methionine = N(1)-methyladenosine(58) in tRNA + S-adenosyl-L-homocysteine + H(+). It carries out the reaction an adenosine in mRNA + S-adenosyl-L-methionine = an N(1)-methyladenosine in mRNA + S-adenosyl-L-homocysteine + H(+). In terms of biological role, catalytic subunit of tRNA (adenine-N(1)-)-methyltransferase, which catalyzes the formation of N(1)-methyladenine at position 58 (m1A58) in initiator methionyl-tRNA. Catalytic subunit of mRNA N(1)-methyltransferase complex, which mediates methylation of adenosine residues at the N(1) position of a small subset of mRNAs: N(1) methylation takes place in tRNA T-loop-like structures of mRNAs and is only present at low stoichiometries. The sequence is that of tRNA (adenine(58)-N(1))-methyltransferase catalytic subunit TRMT61A (Trmt61a) from Rattus norvegicus (Rat).